A 400-amino-acid chain; its full sequence is U-box domain-containing protein 37 (400 aa).

Residues 229-298 (KEWESAYLEE…RKAKEERDLL (70 aa)) adopt a coiled-coil conformation. In terms of domain architecture, U-box spans 324–398 (EAPQYFICPI…QEWLHASSSF (75 aa)).

It carries out the reaction S-ubiquitinyl-[E2 ubiquitin-conjugating enzyme]-L-cysteine + [acceptor protein]-L-lysine = [E2 ubiquitin-conjugating enzyme]-L-cysteine + N(6)-ubiquitinyl-[acceptor protein]-L-lysine.. It participates in protein modification; protein ubiquitination. Functions as an E3 ubiquitin ligase. The sequence is that of U-box domain-containing protein 37 (PUB37) from Arabidopsis thaliana (Mouse-ear cress).